The primary structure comprises 632 residues: Cleavage stimulation factor subunit 2 tau variant (632 aa).

The 79-residue stretch at 16–94 (RSVFVGNIPY…RALRVDNAAS (79 aa)) folds into the RRM domain. Disordered stretches follow at residues 201–296 (IPGK…PGGA) and 365–433 (YMGP…TRPM). Over residues 213–233 (PGGPGPSGPGGPGPGPAPGLC) the composition is skewed to pro residues. A compositionally biased stretch (low complexity) spans 234–244 (PGPNVMLNQQN). The segment covering 275-287 (APGPIPAAVPGPG) has biased composition (pro residues). The segment covering 365–375 (YMGPPHQGPPM) has biased composition (low complexity). 2 stretches are compositionally biased toward basic and acidic residues: residues 377-390 (HGHD…HDMR) and 420-433 (RGGR…TRPM). Residues 428–432 (METRP) form a 1-1; approximate repeat. Positions 428–466 (METRPMETEVLEPRGMERRMETCAMETRGMDARGLEMRG) are 8 X 5 AA tandem repeats of M-E-T-R-[AG]. The 1-2; approximate repeat unit spans residues 433-437 (METEV). The stretch at 438-442 (LEPRG) is one 1-3; approximate repeat. One copy of the 1-4; approximate repeat lies at 443 to 446 (MERR). The stretch at 447 to 451 (METCA) is one 1-5; approximate repeat. Residues 452-456 (METRG) form a 1-6 repeat. One copy of the 1-7; approximate repeat lies at 457–461 (MDARG). The stretch at 462 to 466 (LEMRG) is one 1-8; approximate repeat. The stretch at 508-512 (GGTMQ) is one 2-1; approximate repeat. Positions 508-565 (GGTMQGAGIQGGGMQGAGMQGGGMQGAGMQGGGMQGAGMQAGMQGASMQGGMQGAGMQ) are 12 X 5 AA tandem repeats of G-[AT]-G-[MI]-Q. A 2-2 repeat occupies 513 to 517 (GAGIQ). Residues 518–522 (GGGMQ) form a 2-3; approximate repeat. Residues 519–543 (GGMQGAGMQGGGMQGAGMQGGGMQG) show a composition bias toward gly residues. Residues 519-590 (GGMQGAGMQG…GQSQVTPQDQ (72 aa)) form a disordered region. A 2-4 repeat occupies 523 to 527 (GAGMQ). The stretch at 528 to 532 (GGGMQ) is one 2-5; approximate repeat. The 2-6 repeat unit spans residues 533 to 537 (GAGMQ). A 2-7; approximate repeat occupies 538 to 542 (GGGMQ). The 2-8 repeat unit spans residues 543 to 547 (GAGMQ). The segment covering 544–557 (AGMQAGMQGASMQG) has biased composition (low complexity). One copy of the 2-9; approximate repeat lies at 548–551 (AGMQ). The stretch at 552 to 556 (GASMQ) is one 2-10; approximate repeat. The stretch at 557 to 560 (GGMQ) is one 2-11; approximate repeat. A compositionally biased stretch (gly residues) spans 558 to 574 (GMQGAGMQGASKQGGGQ). A 2-12 repeat occupies 561–565 (GAGMQ). A compositionally biased stretch (low complexity) spans 575-584 (PSSFSPGQSQ). Ser-579 bears the Phosphoserine mark.

As to expression, expressed in testes, where it is restricted to pachytene spermatocytes and spermatids, and in the brain (at protein level).

It localises to the nucleus. May play a significant role in AAUAAA-independent mRNA polyadenylation in germ cells. Directly involved in the binding to pre-mRNAs. This Mus musculus (Mouse) protein is Cleavage stimulation factor subunit 2 tau variant (Cstf2t).